Consider the following 355-residue polypeptide: Aromatic amino acid aminotransferase (355 aa).

K217 bears the N6-(pyridoxal phosphate)lysine mark.

It belongs to the class-II pyridoxal-phosphate-dependent aminotransferase family. As to quaternary structure, homodimer. Pyridoxal 5'-phosphate serves as cofactor.

It catalyses the reaction an aromatic L-alpha-amino acid + 2-oxoglutarate = an aromatic oxo-acid + L-glutamate. Functionally, aminotransferase that catalyzes the conversion of aromatic amino acids and 2-oxoglutarate into corresponding aromatic oxo acids and L-glutamate. The chain is Aromatic amino acid aminotransferase from Mycobacterium avium (strain 104).